Reading from the N-terminus, the 760-residue chain is Protein P1 (760 aa).

The signal sequence occupies residues 1–33 (MASFLKPVNSQGLWLSLLLAITYLFLLPSAGQS). Transmembrane regions (helical) follow at residues 172-192 (LIEFVLVSWSLWLCSVLVYVA), 194-214 (AVPGKFLLYMAAFCTTFWAWP), 218-235 (ASSLIRIVTTPLTLIGFL), and 240-260 (IGLISHCLALTWNMFMTWSLL). Residues 318 to 515 (IPGVQIKKLR…SSSPKFTGCE (198 aa)) form the Peptidase S39 domain. Catalysis depends on for protease activity residues histidine 366, aspartate 396, and serine 465. 2 disordered regions span residues 572–672 (GLWA…LSQV) and 684–760 (LTVQ…PRRN). The segment covering 621–643 (RAEKVRHVRRSEMTPEQKRADNL) has biased composition (basic and acidic residues).

It belongs to the peptidase S39B family. Specific enzymatic cleavages in vivo yield mature proteins. The protease probably cleaves itself and releases the VPg protein.

The protein resides in the membrane. Precursor from which the VPg molecule is probably released at the onset of the RNA synthesis. Essential for virus replication. This is Protein P1 from Pea enation mosaic virus-1 (strain WSG) (PEMV-1).